Consider the following 92-residue polypeptide: Small ribosomal subunit protein uS17 (92 aa).

The protein belongs to the universal ribosomal protein uS17 family. In terms of assembly, part of the 30S ribosomal subunit.

In terms of biological role, one of the primary rRNA binding proteins, it binds specifically to the 5'-end of 16S ribosomal RNA. In Cupriavidus metallidurans (strain ATCC 43123 / DSM 2839 / NBRC 102507 / CH34) (Ralstonia metallidurans), this protein is Small ribosomal subunit protein uS17.